Consider the following 793-residue polypeptide: Putative dipeptidyl aminopeptidase C2E11.08 (793 aa).

The Cytoplasmic segment spans residues 1-24 (MNDFSFEDKGLISRSGFGSRHVRR). The helical; Signal-anchor for type II membrane protein transmembrane segment at 25–45 (VVKALALIFSLLILYLTISNV) threads the bilayer. Residues 46-793 (SDSPPKRDSL…STGVRQHRWD (748 aa)) lie on the Lumenal side of the membrane. Asn101, Asn136, Asn246, Asn299, Asn303, Asn324, Asn336, Asn377, Asn384, Asn407, and Asn535 each carry an N-linked (GlcNAc...) asparagine glycan. Residues Ser647, Asp722, and His755 each act as charge relay system in the active site. Residue Asn761 is glycosylated (N-linked (GlcNAc...) asparagine).

It belongs to the peptidase S9B family.

It localises to the vacuole membrane. This chain is Putative dipeptidyl aminopeptidase C2E11.08, found in Schizosaccharomyces pombe (strain 972 / ATCC 24843) (Fission yeast).